Consider the following 278-residue polypeptide: MEMLEEHRCFEGWQQRWRHDSSTLNCPMTFSIFLPPPRDHTPPPVLYWLSGLTCNDENFTTKAGAQRVAAELGIVLVMPDTSPRGEQVANDDGYDLGQGAGFYLNATQPPWATHYRMYDYLRDELPALIQSQFNVSDRCAISGHSMGGHGALIMALKNPGKYTSVSAFAPIVNPCSVPWGIKAFSTYLGEDKNAWLEWDSCALMYASNAQDAIPTLIDQGDNDQFLADQLQPAVLAEAARQKAWPMTLRIQPGYDHSYYFIASFIEDHLRFHAQYLLK.

Residues Ser145, Asp223, and His256 each act as charge relay system in the active site.

This sequence belongs to the esterase D family.

It catalyses the reaction S-formylglutathione + H2O = formate + glutathione + H(+). Its function is as follows. Serine hydrolase involved in the detoxification of formaldehyde. Hydrolyzes S-formylglutathione to glutathione and formate. In Escherichia coli (strain UTI89 / UPEC), this protein is S-formylglutathione hydrolase YeiG (yeiG).